The following is a 545-amino-acid chain: La-related protein 6B (545 aa).

Polar residues predominate over residues M1–S10. 3 disordered regions span residues M1–P76, L105–T187, and H382–E545. Residues S23–L49 show a composition bias toward low complexity. Positions T61 to P76 are enriched in pro residues. Basic residues predominate over residues H111–H126. A compositionally biased stretch (basic and acidic residues) spans L154 to Q173. Over residues V174–S185 the composition is skewed to polar residues. The 92-residue stretch at T187–A278 folds into the HTH La-type RNA-binding domain. The RRM domain occupies R285–Q383. Residues G448–G464 are compositionally biased toward basic residues. Low complexity predominate over residues Q465–H478. The segment covering N479 to Q497 has biased composition (basic residues). The span at V498 to N509 shows a compositional bias: polar residues. The segment covering M510–Q519 has biased composition (low complexity).

It is found in the nucleus. Its function is as follows. Transcriptional regulator. The polypeptide is La-related protein 6B (LARP6B) (Arabidopsis thaliana (Mouse-ear cress)).